A 101-amino-acid polypeptide reads, in one-letter code: Chaperone modulatory protein CbpM (101 aa).

This sequence belongs to the CbpM family.

Interacts with CbpA and inhibits both the DnaJ-like co-chaperone activity and the DNA binding activity of CbpA. Together with CbpA, modulates the activity of the DnaK chaperone system. Does not inhibit the co-chaperone activity of DnaJ. This is Chaperone modulatory protein CbpM from Escherichia coli O1:K1 / APEC.